The primary structure comprises 206 residues: Cytochrome c oxidase assembly factor 8 (206 aa).

Residues 1-39 (MLPCAAGARGRGAMVVLRAGKKTFLPPLCRAFACRGCQL) constitute a mitochondrion transit peptide.

This sequence belongs to the COA8 family. In terms of processing, N-terminal mitochondrial targeting sequence is cleaved from the mature protein once in the mitochondrion. Post-translationally, in normal conditions, the cytoplasmic precursor protein is rapidly degraded by the ubiquitination-proteasome system (UPS). Oxidative stress induces protein stabilization and import into mitochondria where it protects COX from degradation. In terms of tissue distribution, expressed in fibroblasts.

The protein resides in the mitochondrion inner membrane. In terms of biological role, required for cytochrome c complex (COX) IV assembly and function Protects COX assembly from oxidation-induced degradation, COX being the terminal component of the mitochondrial respiratory chain. This chain is Cytochrome c oxidase assembly factor 8, found in Homo sapiens (Human).